The primary structure comprises 202 residues: Small ribosomal subunit protein uS4c (202 aa).

The 64-residue stretch at 90-153 (MRLDNVIFRL…KSEAIISKNI (64 aa)) folds into the S4 RNA-binding domain.

It belongs to the universal ribosomal protein uS4 family. As to quaternary structure, part of the 30S ribosomal subunit. Contacts protein S5. The interaction surface between S4 and S5 is involved in control of translational fidelity.

It is found in the plastid. Its subcellular location is the chloroplast. In terms of biological role, one of the primary rRNA binding proteins, it binds directly to 16S rRNA where it nucleates assembly of the body of the 30S subunit. Functionally, with S5 and S12 plays an important role in translational accuracy. This chain is Small ribosomal subunit protein uS4c (rps4), found in Cyathophorum bulbosum (Moss).